Consider the following 142-residue polypeptide: Peptidyl-prolyl cis-trans isomerase FKBP2 (142 aa).

The signal sequence occupies residues 1–21; the sequence is MRLSWFRVLTVLSICLSAVAT. Positions 49-137 constitute a PPIase FKBP-type domain; it reads GDVLHMHYTG…VFEVELLKIE (89 aa). The Prevents secretion from ER motif lies at 139–142; the sequence is RTEL.

The protein belongs to the FKBP-type PPIase family. FKBP2 subfamily. In terms of assembly, interacts with ARFGEF1/BIG1 and the C-terminal of EPB41L2. As to expression, T-cells and thymus.

It is found in the endoplasmic reticulum membrane. The enzyme catalyses [protein]-peptidylproline (omega=180) = [protein]-peptidylproline (omega=0). With respect to regulation, inhibited by both FK506 and rapamycin. Its function is as follows. PPIases accelerate the folding of proteins. It catalyzes the cis-trans isomerization of proline imidic peptide bonds in oligopeptides. The polypeptide is Peptidyl-prolyl cis-trans isomerase FKBP2 (FKBP2) (Homo sapiens (Human)).